The primary structure comprises 794 residues: Zinc finger protein 148 (794 aa).

Lys-6 is covalently cross-linked (Glycyl lysine isopeptide (Lys-Gly) (interchain with G-Cter in SUMO2)). The residue at position 51 (Ser-51) is a Phosphoserine. Residues Lys-88, Lys-115, and Lys-132 each participate in a glycyl lysine isopeptide (Lys-Gly) (interchain with G-Cter in SUMO2) cross-link. Residues 171-193 form a C2H2-type 1 zinc finger; it reads HVCEHCNAAFRTNYHLQRHVFIH. Thr-194 carries the post-translational modification Phosphothreonine. 2 consecutive C2H2-type zinc fingers follow at residues 199–221 and 227–249; these read FQCS…EKIH and FRCD…KRTH. Residue Ser-250 is modified to Phosphoserine. The C2H2-type 4 zinc finger occupies 255 to 278; it reads YQCEYCLQYFSRTDRVLKHKRMCH. Residue Lys-291 forms a Glycyl lysine isopeptide (Lys-Gly) (interchain with G-Cter in SUMO2) linkage. The interval 298–336 is disordered; sequence EEDSGFSTSPKDNSLPKKKRQKTEKKSSGMDKESVLDKS. Phosphoserine is present on residues Ser-301 and Ser-306. Residue Lys-308 forms a Glycyl lysine isopeptide (Lys-Gly) (interchain with G-Cter in SUMO2) linkage. Positions 321-336 are enriched in basic and acidic residues; sequence EKKSSGMDKESVLDKS. Lys-356 participates in a covalent cross-link: Glycyl lysine isopeptide (Lys-Gly) (interchain with G-Cter in SUMO1); alternate. A Glycyl lysine isopeptide (Lys-Gly) (interchain with G-Cter in SUMO2); alternate cross-link involves residue Lys-356. A Glycyl lysine isopeptide (Lys-Gly) (interchain with G-Cter in SUMO2) cross-link involves residue Lys-402. Phosphoserine is present on Ser-412. Residues Lys-421 and Lys-424 each participate in a glycyl lysine isopeptide (Lys-Gly) (interchain with G-Cter in SUMO2) cross-link. Polar residues predominate over residues 574–588; it reads NSSDVPEVTQSENVG. The tract at residues 574-599 is disordered; sequence NSSDVPEVTQSENVGSSSQASSSDKA. Lys-607 is subject to N6-acetyllysine. A phosphoserine mark is found at Ser-665 and Ser-784.

Belongs to the krueppel C2H2-type zinc-finger protein family. Interacts with HNRNPDL. Interacts with the 5FMC complex; the interaction requires association with CHTOP. Interacts with CAVIN1. Post-translationally, sumoylated with SUMO2. Desumoylated by SENP3, resulting in the stimulation of transcription of its target genes. As to expression, strong expression detected in brain, lung, liver and kidney, with lower levels detected in spleen, skeletal muscle, testis and heart.

Its subcellular location is the nucleus. In terms of biological role, involved in transcriptional regulation. Represses the transcription of a number of genes including gastrin, stromelysin and enolase. Binds to the G-rich box in the enhancer region of these genes. The protein is Zinc finger protein 148 (Znf148) of Mus musculus (Mouse).